The sequence spans 801 residues: Phenylalanine--tRNA ligase beta subunit (801 aa).

Positions 39-154 (LKMPQKVVVG…GHLELGVELG (116 aa)) constitute a tRNA-binding domain. Residues 398–475 (IDEITIKTTF…RIYGIDNVSS (78 aa)) enclose the B5 domain. The Mg(2+) site is built by Asp-453, Asp-459, Glu-462, and Glu-463. Residues 708 to 800 (SKYQKSTRDL…LVREFDAVLR (93 aa)) form the FDX-ACB domain.

This sequence belongs to the phenylalanyl-tRNA synthetase beta subunit family. Type 1 subfamily. As to quaternary structure, tetramer of two alpha and two beta subunits. Mg(2+) is required as a cofactor.

The protein localises to the cytoplasm. The catalysed reaction is tRNA(Phe) + L-phenylalanine + ATP = L-phenylalanyl-tRNA(Phe) + AMP + diphosphate + H(+). The polypeptide is Phenylalanine--tRNA ligase beta subunit (Helicobacter hepaticus (strain ATCC 51449 / 3B1)).